The chain runs to 931 residues: Protein phosphatase 1 regulatory subunit 37 homolog (931 aa).

A disordered region spans residues 20–71 (TAASSPASPIPPTSPSMFATPPHQQSHSSATSVRKKVCQEANSSADDPDSDA). Over residues 41 to 51 (PHQQSHSSATS) the composition is skewed to polar residues. 8 LRR repeats span residues 232–259 (AISL…LARA), 262–285 (SASL…VLIC), 290–314 (NTGI…IYQL), 323–346 (LLDL…LRNR), 351–374 (KSAL…SLAE), 379–407 (NTKI…LVSN), 409–430 (HLHR…ILAE), and 435–458 (NTAL…ALHS). The span at 519–533 (QDHVSEDTEKENKDA) shows a compositional bias: basic and acidic residues. 2 disordered regions span residues 519 to 602 (QDHV…RHQR) and 780 to 807 (PDCT…IRQR). A compositionally biased stretch (acidic residues) spans 534 to 547 (DNDDKEPENEDGDT). Residues 554 to 563 (SDASADQSDS) are compositionally biased toward low complexity. Basic and acidic residues-rich tracts occupy residues 564 to 584 (PADK…EKRP) and 790 to 807 (TTSR…IRQR).

This sequence belongs to the PPP1R37 family.

The chain is Protein phosphatase 1 regulatory subunit 37 homolog from Caenorhabditis briggsae.